A 292-amino-acid chain; its full sequence is 33 kDa chaperonin (292 aa).

2 cysteine pairs are disulfide-bonded: cysteine 230/cysteine 232 and cysteine 263/cysteine 266.

This sequence belongs to the HSP33 family. Post-translationally, under oxidizing conditions two disulfide bonds are formed involving the reactive cysteines. Under reducing conditions zinc is bound to the reactive cysteines and the protein is inactive.

The protein localises to the cytoplasm. In terms of biological role, redox regulated molecular chaperone. Protects both thermally unfolding and oxidatively damaged proteins from irreversible aggregation. Plays an important role in the bacterial defense system toward oxidative stress. The chain is 33 kDa chaperonin from Salmonella typhimurium (strain LT2 / SGSC1412 / ATCC 700720).